The following is a 125-amino-acid chain: Class III hydrophobin G (125 aa).

A signal peptide spans 1–20; it reads MKPSIVTFLMLAAVTAAVSA. Intrachain disulfides connect C54–C107, C60–C101, C61–C94, and C108–C122.

This sequence belongs to the fungal hydrophobin family. As to quaternary structure, self-assembles to form functional amyloid fibrils called rodlets. Self-assembly into fibrillar rodlets occurs spontaneously at hydrophobic:hydrophilic interfaces and the rodlets further associate laterally to form amphipathic monolayers.

The protein localises to the secreted. The protein resides in the cell wall. Functionally, aerial growth, conidiation, and dispersal of filamentous fungi in the environment rely upon a capability of their secreting small amphipathic proteins called hydrophobins (HPBs) with low sequence identity. Class I can self-assemble into an outermost layer of rodlet bundles on aerial cell surfaces, conferring cellular hydrophobicity that supports fungal growth, development and dispersal; whereas Class II form highly ordered films at water-air interfaces through intermolecular interactions but contribute nothing to the rodlet structure. RodF and rodG belong to Class III, which contains hydrophobins with intermediate (between classes I and II) or atypical characteristics. RodG, unlike rodA, is not required for rodlet formation. The chain is Class III hydrophobin G from Aspergillus fumigatus (strain ATCC MYA-4609 / CBS 101355 / FGSC A1100 / Af293) (Neosartorya fumigata).